An 89-amino-acid polypeptide reads, in one-letter code: Small ribosomal subunit protein uS17 (89 aa).

It belongs to the universal ribosomal protein uS17 family. As to quaternary structure, part of the 30S ribosomal subunit.

Functionally, one of the primary rRNA binding proteins, it binds specifically to the 5'-end of 16S ribosomal RNA. This is Small ribosomal subunit protein uS17 from Chlorobaculum tepidum (strain ATCC 49652 / DSM 12025 / NBRC 103806 / TLS) (Chlorobium tepidum).